The primary structure comprises 346 residues: Phenylalanine--tRNA ligase alpha subunit (346 aa).

Position 262 (Glu262) interacts with Mg(2+).

This sequence belongs to the class-II aminoacyl-tRNA synthetase family. Phe-tRNA synthetase alpha subunit type 1 subfamily. Tetramer of two alpha and two beta subunits. Requires Mg(2+) as cofactor.

The protein localises to the cytoplasm. The catalysed reaction is tRNA(Phe) + L-phenylalanine + ATP = L-phenylalanyl-tRNA(Phe) + AMP + diphosphate + H(+). The sequence is that of Phenylalanine--tRNA ligase alpha subunit from Ehrlichia chaffeensis (strain ATCC CRL-10679 / Arkansas).